The chain runs to 192 residues: 7-methyl-GTP pyrophosphatase (192 aa).

D69 functions as the Proton acceptor in the catalytic mechanism.

Belongs to the Maf family. YceF subfamily. It depends on a divalent metal cation as a cofactor.

The protein localises to the cytoplasm. The catalysed reaction is N(7)-methyl-GTP + H2O = N(7)-methyl-GMP + diphosphate + H(+). Nucleoside triphosphate pyrophosphatase that hydrolyzes 7-methyl-GTP (m(7)GTP). May have a dual role in cell division arrest and in preventing the incorporation of modified nucleotides into cellular nucleic acids. This chain is 7-methyl-GTP pyrophosphatase, found in Pseudomonas fluorescens (strain ATCC BAA-477 / NRRL B-23932 / Pf-5).